Consider the following 409-residue polypeptide: Elongation factor Tu (409 aa).

The 205-residue stretch at lysine 10–glutamate 214 folds into the tr-type G domain. The G1 stretch occupies residues glycine 19–threonine 26. Residue glycine 19–threonine 26 coordinates GTP. A Mg(2+)-binding site is contributed by threonine 26. The tract at residues glycine 60 to asparagine 64 is G2. The interval aspartate 81 to glycine 84 is G3. GTP contacts are provided by residues aspartate 81–histidine 85 and asparagine 136–aspartate 139. Residues asparagine 136–aspartate 139 form a G4 region. The G5 stretch occupies residues serine 174–leucine 176.

This sequence belongs to the TRAFAC class translation factor GTPase superfamily. Classic translation factor GTPase family. EF-Tu/EF-1A subfamily. As to quaternary structure, monomer.

It localises to the cytoplasm. The catalysed reaction is GTP + H2O = GDP + phosphate + H(+). Its function is as follows. GTP hydrolase that promotes the GTP-dependent binding of aminoacyl-tRNA to the A-site of ribosomes during protein biosynthesis. This is Elongation factor Tu from Trichormus variabilis (strain ATCC 29413 / PCC 7937) (Anabaena variabilis).